The chain runs to 63 residues: Small ribosomal subunit protein bS21 (63 aa).

The protein belongs to the bacterial ribosomal protein bS21 family.

In Phocaeicola vulgatus (strain ATCC 8482 / DSM 1447 / JCM 5826 / CCUG 4940 / NBRC 14291 / NCTC 11154) (Bacteroides vulgatus), this protein is Small ribosomal subunit protein bS21.